The primary structure comprises 265 residues: Thymidine kinase 2, mitochondrial (265 aa).

Residues 1–33 constitute a mitochondrion transit peptide; that stretch reads MLLRPLRGWAALALRCFEPGSPGSPASGPGSRR. Low complexity predominate over residues 21–31; that stretch reads SPGSPASGPGS. The disordered stretch occupies residues 21–45; the sequence is SPGSPASGPGSRRVQRGAWPSDKER. 57 to 65 serves as a coordination point for ATP; sequence GNIASGKTT. Catalysis depends on Glu-133, which acts as the Proton acceptor.

The protein belongs to the DCK/DGK family. Homodimer.

It localises to the mitochondrion. It catalyses the reaction thymidine + ATP = dTMP + ADP + H(+). The enzyme catalyses 2'-deoxycytidine + ATP = dCMP + ADP + H(+). It carries out the reaction 2'-deoxyuridine + ATP = dUMP + ADP + H(+). Functionally, phosphorylates thymidine, deoxycytidine, and deoxyuridine in the mitochondrial matrix. In non-replicating cells, where cytosolic dNTP synthesis is down-regulated, mtDNA synthesis depends solely on TK2 and DGUOK. This chain is Thymidine kinase 2, mitochondrial (TK2), found in Macaca fascicularis (Crab-eating macaque).